Here is a 349-residue protein sequence, read N- to C-terminus: Isopentenyl-diphosphate delta-isomerase (349 aa).

Position 9–10 (9–10 (RK)) interacts with substrate. Residues 65–67 (AMT), S95, and N124 contribute to the FMN site. 95–97 (STH) provides a ligand contact to substrate. Q154 lines the substrate pocket. Residue E155 coordinates Mg(2+). FMN is bound by residues K186, S211, T216, 262-264 (GLR), and 283-284 (SR).

This sequence belongs to the IPP isomerase type 2 family. Homooctamer. Dimer of tetramers. It depends on FMN as a cofactor. Requires NADPH as cofactor. Mg(2+) is required as a cofactor.

Its subcellular location is the cytoplasm. The enzyme catalyses isopentenyl diphosphate = dimethylallyl diphosphate. Functionally, involved in the biosynthesis of isoprenoids. Catalyzes the 1,3-allylic rearrangement of the homoallylic substrate isopentenyl (IPP) to its allylic isomer, dimethylallyl diphosphate (DMAPP). In Staphylococcus aureus (strain N315), this protein is Isopentenyl-diphosphate delta-isomerase.